Here is a 516-residue protein sequence, read N- to C-terminus: L-amino-acid oxidase (516 aa).

An N-terminal signal peptide occupies residues 1-18 (MNVFFMFSLLFLAALGSC). Cys-28 and Cys-191 are disulfide-bonded. Residues 61 to 62 (MA), 81 to 82 (EA), Arg-89, and 105 to 108 (GPMR) contribute to the FAD site. Arg-108 contacts substrate. Asn-190 carries an N-linked (GlcNAc...) (complex) asparagine glycan. A substrate-binding site is contributed by His-241. FAD is bound at residue Val-279. A disulfide bridge links Cys-349 with Cys-430. An N-linked (GlcNAc...) (complex) asparagine glycan is attached at Asn-379. Residue Tyr-390 participates in substrate binding. Residues Glu-475 and 482–487 (GWIDST) each bind FAD. 482 to 483 (GW) lines the substrate pocket.

As to quaternary structure, homodimer; non-covalently linked. It depends on FAD as a cofactor. Post-translationally, N-glycosylated at Asn-190 and Asn-379 with bis-sialylated, biantennary, core-fucosylated dodecasaccharide (composed of N-acetylglucosamine, fucose, mannose, galactose, and sialic acid residues). As to expression, expressed by the venom gland.

The protein resides in the secreted. The catalysed reaction is an L-alpha-amino acid + O2 + H2O = a 2-oxocarboxylate + H2O2 + NH4(+). It catalyses the reaction L-leucine + O2 + H2O = 4-methyl-2-oxopentanoate + H2O2 + NH4(+). The enzyme catalyses L-phenylalanine + O2 + H2O = 3-phenylpyruvate + H2O2 + NH4(+). It carries out the reaction L-tryptophan + O2 + H2O = indole-3-pyruvate + H2O2 + NH4(+). The catalysed reaction is L-methionine + O2 + H2O = 4-methylsulfanyl-2-oxobutanoate + H2O2 + NH4(+). It catalyses the reaction L-isoleucine + O2 + H2O = (S)-3-methyl-2-oxopentanoate + H2O2 + NH4(+). The enzyme catalyses L-arginine + O2 + H2O = 5-guanidino-2-oxopentanoate + H2O2 + NH4(+). It carries out the reaction L-aspartate + O2 + H2O = oxaloacetate + H2O2 + NH4(+). The catalysed reaction is L-histidine + O2 + H2O = 3-(imidazol-5-yl)pyruvate + H2O2 + NH4(+). It catalyses the reaction L-2-aminohexanoate + O2 + H2O = 2-oxohexanoate + H2O2 + NH4(+). The enzyme catalyses L-2-aminopentanoate + O2 + H2O = 2-oxopentanoate + H2O2 + NH4(+). Its function is as follows. Catalyzes an oxidative deamination of predominantly hydrophobic and aromatic L-amino acids, thus producing hydrogen peroxide that may contribute to the diverse toxic effects of this enzyme. Shows high affinity for L-Phe, L-Trp, L-Met, L-Leu, and L-Ile, moderate affinity for L-Arg, L-Asp, and L-His, and very low affinity for L-Gln, L-Lys, and L-Ala. Also shows high activity on L-norleucine (L-2-aminohexanoate), and L-norvaline (L-2-aminopentanoate) and a weak activity on L-ornithine and L-aminobutyric acid. Also exhibits diverse biological activities, such as hemorrhage, hemolysis, edema, apoptosis of vascular endothelial cells or tumor cell lines, and antiparasitic activities, as well as regulation of platelet aggregation. Its effect on platelets is controversial, since it either induces aggregation or inhibits agonist-induced aggregation. These different effects are probably due to different experimental conditions. A possible explanation of high efficacy it that LAAO may bind to target cells through its sialylated glycan moiety that would bind to sialic acid-binding lectins (siglec) on target cells. This interaction may result in production of locally high concentrations of hydrogen peroxide in or near the binding interface, leading, in turn to oxidative damage of the siglec or another adjacent cell structural elements. The chain is L-amino-acid oxidase from Calloselasma rhodostoma (Malayan pit viper).